The chain runs to 304 residues: Ferredoxin fas2 (304 aa).

Positions 2–29 (KVVVNERRCFGSGQCVLVAPEVFEQSND) constitute a 4Fe-4S ferredoxin-type domain. Positions 10, 16, and 54 each coordinate [3Fe-4S] cluster. Residues 66 to 304 (MRQEPTEFSY…QSARSSIQQR (239 aa)) are transketolase-like.

In the C-terminal section; belongs to the transketolase family. [3Fe-4S] cluster serves as cofactor.

Its function is as follows. Plays a role in electron transfer. The fas operon encodes genes involved in cytokinin production and in host plant fasciation (leafy gall). This chain is Ferredoxin fas2 (fas2), found in Rhodococcoides fascians (Rhodococcus fascians).